The sequence spans 297 residues: MRPELSQYTHVSAGKVREIYEVDDERLLMVVSDRISAYDHILEPEIPDKGRVLTAMSMYFFHNIDFPNHLAGPIDDPAIPEEVLGRAMVCKKLKMLPFECVARGYLTGSGLKEYQETGTVCGVELPEGLVEASKLPEPIFTPATKAELGDHDENVSFDVVVEKLGEARANELRDATLRIYSEAAALAEERGIILADTKFEFGLDEDGRLVLADEVLTPDSSRYWPADGYEEGKVQPSFDKQYVRNWLTGPKSGWSTDDVTPPPSLPGSVVEATRERYVEAFERITGKKFCEWIGCCV.

Belongs to the SAICAR synthetase family.

It catalyses the reaction 5-amino-1-(5-phospho-D-ribosyl)imidazole-4-carboxylate + L-aspartate + ATP = (2S)-2-[5-amino-1-(5-phospho-beta-D-ribosyl)imidazole-4-carboxamido]succinate + ADP + phosphate + 2 H(+). It functions in the pathway purine metabolism; IMP biosynthesis via de novo pathway; 5-amino-1-(5-phospho-D-ribosyl)imidazole-4-carboxamide from 5-amino-1-(5-phospho-D-ribosyl)imidazole-4-carboxylate: step 1/2. The polypeptide is Phosphoribosylaminoimidazole-succinocarboxamide synthase (Corynebacterium diphtheriae (strain ATCC 700971 / NCTC 13129 / Biotype gravis)).